The sequence spans 245 residues: MNVTLLIPARYGSSRFPGKPLAPINGKPMIQHVYERAALAKGLNAIYVATDDERIKDAVESFGGKVVMTGADAASGTDRIEDAITQLGLADDDLVINLQGDQPLIDPISIEQIVELFRRHPGEFEMATLGYQISDKAELDDPKHVKMVFDNDMYALYFSRACIPFGRDVSEYPVYKHLGVYAYTRRFVHTFNSLPLGRLEDLEKLEQLRALEYGHRIKVAISAFDSPEVDTPEDIRRCENRLKVD.

The protein belongs to the KdsB family.

Its subcellular location is the cytoplasm. It catalyses the reaction 8-amino-3,8-dideoxy-alpha-D-manno-octulosonate + CTP = CMP-8-amino-3,8-dideoxy-alpha-D-manno-oct-2-ulosonate + diphosphate. It functions in the pathway bacterial outer membrane biogenesis; lipopolysaccharide biosynthesis. Activates KDO8N (a required 8-carbon sugar) for incorporation into bacterial lipopolysaccharide in the Shewanella genus. This chain is 8-amino-3,8-dideoxy-manno-octulosonate cytidylyltransferase, found in Shewanella amazonensis (strain ATCC BAA-1098 / SB2B).